Consider the following 342-residue polypeptide: N-acetyl-gamma-glutamyl-phosphate reductase (342 aa).

Cysteine 149 is an active-site residue.

It belongs to the NAGSA dehydrogenase family. Type 1 subfamily.

Its subcellular location is the cytoplasm. The catalysed reaction is N-acetyl-L-glutamate 5-semialdehyde + phosphate + NADP(+) = N-acetyl-L-glutamyl 5-phosphate + NADPH + H(+). It functions in the pathway amino-acid biosynthesis; L-arginine biosynthesis; N(2)-acetyl-L-ornithine from L-glutamate: step 3/4. Its function is as follows. Catalyzes the NADPH-dependent reduction of N-acetyl-5-glutamyl phosphate to yield N-acetyl-L-glutamate 5-semialdehyde. The sequence is that of N-acetyl-gamma-glutamyl-phosphate reductase from Cereibacter sphaeroides (strain KD131 / KCTC 12085) (Rhodobacter sphaeroides).